A 310-amino-acid chain; its full sequence is Carbamate kinase (310 aa).

Belongs to the carbamate kinase family. In terms of assembly, homodimer.

It localises to the cytoplasm. It catalyses the reaction hydrogencarbonate + NH4(+) + ATP = carbamoyl phosphate + ADP + H2O + H(+). It functions in the pathway amino-acid degradation; L-arginine degradation via ADI pathway. The protein is Carbamate kinase of Haemophilus influenzae (strain ATCC 51907 / DSM 11121 / KW20 / Rd).